Consider the following 185-residue polypeptide: Peptide deformylase 2 (185 aa).

Cysteine 108 and histidine 150 together coordinate Fe cation. Glutamate 151 is an active-site residue. Histidine 154 lines the Fe cation pocket.

Belongs to the polypeptide deformylase family. Requires Fe(2+) as cofactor.

The catalysed reaction is N-terminal N-formyl-L-methionyl-[peptide] + H2O = N-terminal L-methionyl-[peptide] + formate. In terms of biological role, removes the formyl group from the N-terminal Met of newly synthesized proteins. Requires at least a dipeptide for an efficient rate of reaction. N-terminal L-methionine is a prerequisite for activity but the enzyme has broad specificity at other positions. The protein is Peptide deformylase 2 of Nitrosomonas europaea (strain ATCC 19718 / CIP 103999 / KCTC 2705 / NBRC 14298).